The following is a 359-amino-acid chain: Peptide chain release factor 1 (359 aa).

An N5-methylglutamine modification is found at Gln234. A disordered region spans residues 283 to 305 (SQKDAARAADRRAQVGSGDRSER).

Belongs to the prokaryotic/mitochondrial release factor family. Post-translationally, methylated by PrmC. Methylation increases the termination efficiency of RF1.

The protein localises to the cytoplasm. In terms of biological role, peptide chain release factor 1 directs the termination of translation in response to the peptide chain termination codons UAG and UAA. The polypeptide is Peptide chain release factor 1 (Methylobacterium nodulans (strain LMG 21967 / CNCM I-2342 / ORS 2060)).